The sequence spans 256 residues: Large ribosomal subunit protein bL28m (256 aa).

The N-terminal 55 residues, 1–55 (MPLHKYPVWLWKRLQLREGICSRLPGHYLRSLEEERTPTPVHYRPHGAKFKINPK), are a transit peptide targeting the mitochondrion.

This sequence belongs to the bacterial ribosomal protein bL28 family. Component of the mitochondrial large ribosomal subunit (mt-LSU). Mature mammalian 55S mitochondrial ribosomes consist of a small (28S) and a large (39S) subunit. The 28S small subunit contains a 12S ribosomal RNA (12S mt-rRNA) and 30 different proteins. The 39S large subunit contains a 16S rRNA (16S mt-rRNA), a copy of mitochondrial valine transfer RNA (mt-tRNA(Val)), which plays an integral structural role, and 52 different proteins. Interacts with OXA1L. Found in a variety of normal tissues including spleen, testes, thymus, liver, kidney, brain, adrenal, lung and retinal tissue.

It is found in the mitochondrion. This chain is Large ribosomal subunit protein bL28m (MRPL28), found in Homo sapiens (Human).